A 545-amino-acid polypeptide reads, in one-letter code: Chaperonin GroEL (545 aa).

Residues 30 to 33, Lys51, 87 to 91, Gly416, 479 to 481, and Asp495 each bind ATP; these read TMGP, DGTTT, and NAA.

Belongs to the chaperonin (HSP60) family. In terms of assembly, forms a cylinder of 14 subunits composed of two heptameric rings stacked back-to-back. Interacts with the co-chaperonin GroES.

It is found in the cytoplasm. The catalysed reaction is ATP + H2O + a folded polypeptide = ADP + phosphate + an unfolded polypeptide.. Together with its co-chaperonin GroES, plays an essential role in assisting protein folding. The GroEL-GroES system forms a nano-cage that allows encapsulation of the non-native substrate proteins and provides a physical environment optimized to promote and accelerate protein folding. The protein is Chaperonin GroEL of Nautilia profundicola (strain ATCC BAA-1463 / DSM 18972 / AmH).